Consider the following 123-residue polypeptide: MPTIEQLVRKGRRGKPKKSKTLALKGSPLRRGVCTRVYTTTPKKPNSALRKVARVRLSSGIEVTAYIPGEGHNLQEHSIVLVRGGRVKDLPGVRYHIVRGALDTQGVKDRKQGRSLYGAKKAK.

Aspartate 89 carries the 3-methylthioaspartic acid modification.

The protein belongs to the universal ribosomal protein uS12 family. Part of the 30S ribosomal subunit. Contacts proteins S8 and S17. May interact with IF1 in the 30S initiation complex.

Functionally, with S4 and S5 plays an important role in translational accuracy. Its function is as follows. Interacts with and stabilizes bases of the 16S rRNA that are involved in tRNA selection in the A site and with the mRNA backbone. Located at the interface of the 30S and 50S subunits, it traverses the body of the 30S subunit contacting proteins on the other side and probably holding the rRNA structure together. The combined cluster of proteins S8, S12 and S17 appears to hold together the shoulder and platform of the 30S subunit. The chain is Small ribosomal subunit protein uS12 from Bifidobacterium animalis subsp. lactis (strain AD011).